We begin with the raw amino-acid sequence, 498 residues long: ATP synthase subunit beta, chloroplastic (498 aa).

172–179 lines the ATP pocket; it reads GGAGVGKT.

The protein belongs to the ATPase alpha/beta chains family. F-type ATPases have 2 components, CF(1) - the catalytic core - and CF(0) - the membrane proton channel. CF(1) has five subunits: alpha(3), beta(3), gamma(1), delta(1), epsilon(1). CF(0) has four main subunits: a(1), b(1), b'(1) and c(9-12).

It localises to the plastid. Its subcellular location is the chloroplast thylakoid membrane. It catalyses the reaction ATP + H2O + 4 H(+)(in) = ADP + phosphate + 5 H(+)(out). Produces ATP from ADP in the presence of a proton gradient across the membrane. The catalytic sites are hosted primarily by the beta subunits. This chain is ATP synthase subunit beta, chloroplastic, found in Licuala grandis (Ruffled fan palm).